A 40-amino-acid chain; its full sequence is Large ribosomal subunit protein bL36 (40 aa).

This sequence belongs to the bacterial ribosomal protein bL36 family.

The polypeptide is Large ribosomal subunit protein bL36 (Corynebacterium glutamicum (strain R)).